The chain runs to 530 residues: PC4 and SFRS1-interacting protein (530 aa).

A PWWP domain is found at 1-64 (MTRDFKPGDL…PKDIFPYSEN (64 aa)). Lys-75 participates in a covalent cross-link: Glycyl lysine isopeptide (Lys-Gly) (interchain with G-Cter in SUMO2). Residues 86 to 349 (NNPKVKFSSQ…VEKKRETSMD (264 aa)) form a disordered region. Polar residues predominate over residues 92 to 104 (FSSQQASTKQSNA). Phosphoserine is present on residues Ser-102, Ser-105, and Ser-106. Residues 113–135 (KETSVSKEDTDHEEKASNEDVTK) show a composition bias toward basic and acidic residues. Thr-115 and Thr-122 each carry phosphothreonine. Position 129 is a phosphoserine (Ser-129). At Thr-141 the chain carries Phosphothreonine. Residues 144–153 (AARRGRKRKA) are compositionally biased toward basic residues. A Nuclear localization signal motif is present at residues 146 to 156 (RRGRKRKAEKQ). The residue at position 167 (Thr-167) is a Phosphothreonine. Ser-177 and Ser-206 each carry phosphoserine. Over residues 213 to 261 (EEDKSKKKGQEEKQPKKQLKKDEEGQKEEDKPRKEPDKKEGKKEVESKR) the composition is skewed to basic and acidic residues. Ser-271 carries the phosphoserine modification. The residue at position 272 (Thr-272) is a Phosphothreonine. Residues Ser-273 and Ser-275 each carry the phosphoserine modification. Over residues 274–283 (DSEEEGDDQE) the composition is skewed to acidic residues. The segment covering 287–302 (KRKGGRNFQTAHRRNM) has biased composition (basic residues). The span at 305–349 (GQHEKEAADRKRKQEEQMETEQQNKDEGKKPEVKKVEKKRETSMD) shows a compositional bias: basic and acidic residues. Coiled coils occupy residues 306–334 (QHEK…EGKK) and 371–395 (NRCI…KHTE). The segment at 340–417 (VEKKRETSMD…VSQIIMEKST (78 aa)) is integrase-binding domain (IBD). Ser-434 is modified (phosphoserine). Thr-437 carries the phosphothreonine modification. Ser-443 carries the phosphoserine modification. Over residues 446-473 (EQRQHEEANKTKDQGKKGPNKKLDKEQT) the composition is skewed to basic and acidic residues. Residues 446–530 (EQRQHEEANK…ISLKDSTLDN (85 aa)) are disordered. Positions 474 to 494 (GSKTLNGGSDAPDSNQAQHNG) are enriched in polar residues. Positions 498–530 (EESKDKHEASSKKKPSNEERETEISLKDSTLDN) are enriched in basic and acidic residues. Arg-517 is modified (citrulline). Phosphoserine is present on Ser-522. Thr-527 bears the Phosphothreonine mark.

Belongs to the HDGF family. Monomer. Interacts with IFRD1/PC4. Interacts (via IBD domain) with POGZ (via IBM motif) and CDCA7L (via IBM motifs). Interacts (via IBD domain) with KMT2A (via IBM motifs) with a moderate affinity whereas interacts with the KMT2A-MEN1 complex with a greater affinity; MEN1 enhances interaction of KMT2A with PSIP1. Interacts (via IBD domain) with IWS1 (via IBM motif), MED1 (via IBM motif) and DBF4 (via IBM motifs). In terms of assembly, (Microbial infection) Interacts (via IBD domain) with feline immunodeficiency virus (FIV) integrase (IN), determining its nuclear localization, its tight association with chromatin and its protection from the proteasome. In terms of processing, citrullinated by PADI4.

The protein localises to the nucleus. In terms of biological role, transcriptional coactivator involved in neuroepithelial stem cell differentiation and neurogenesis. Involved in particular in lens epithelial cell gene regulation and stress responses. May play an important role in lens epithelial to fiber cell terminal differentiation. May play a protective role during stress-induced apoptosis. The sequence is that of PC4 and SFRS1-interacting protein (PSIP1) from Felis catus (Cat).